A 380-amino-acid chain; its full sequence is Cytochrome b (380 aa).

Transmembrane regions (helical) follow at residues 34 to 54 (FGSLLGICLVTQIVTGLLLAM), 78 to 99 (WLIRNLHANGASFFFICIYLHI), 114 to 134 (WNVGVILLLTLMATAFVGYVL), and 179 to 199 (FFALHFLLPFVIAGLTLVHLT). Positions 84 and 98 each coordinate heme b. Heme b contacts are provided by His-183 and His-197. His-202 provides a ligand contact to a ubiquinone. Transmembrane regions (helical) follow at residues 227-247 (IKDILGFALMLASLVALALFS), 289-309 (LGGVLALAASILVLFLMPLLH), 321-341 (LSQILFWVLVTNVLILTWIGS), and 348-368 (FIIIGQLASLSYFTIILVLFP).

The protein belongs to the cytochrome b family. In terms of assembly, the cytochrome bc1 complex contains 11 subunits: 3 respiratory subunits (MT-CYB, CYC1 and UQCRFS1), 2 core proteins (UQCRC1 and UQCRC2) and 6 low-molecular weight proteins (UQCRH/QCR6, UQCRB/QCR7, UQCRQ/QCR8, UQCR10/QCR9, UQCR11/QCR10 and a cleavage product of UQCRFS1). This cytochrome bc1 complex then forms a dimer. Requires heme b as cofactor.

The protein localises to the mitochondrion inner membrane. Its function is as follows. Component of the ubiquinol-cytochrome c reductase complex (complex III or cytochrome b-c1 complex) that is part of the mitochondrial respiratory chain. The b-c1 complex mediates electron transfer from ubiquinol to cytochrome c. Contributes to the generation of a proton gradient across the mitochondrial membrane that is then used for ATP synthesis. The protein is Cytochrome b (MT-CYB) of Vireo olivaceus (Red-eyed vireo).